The following is a 152-amino-acid chain: Large ribosomal subunit protein bL34c (152 aa).

Residues 1–91 constitute a chloroplast transit peptide; that stretch reads MATLSLLSTG…DRCRRFVVRA (91 aa).

In terms of assembly, component of the chloroplast large ribosomal subunit (LSU). Mature 70S chloroplast ribosomes of higher plants consist of a small (30S) and a large (50S) subunit. The 30S small subunit contains 1 molecule of ribosomal RNA (16S rRNA) and 24 different proteins. The 50S large subunit contains 3 rRNA molecules (23S, 5S and 4.5S rRNA) and 33 different proteins.

Its subcellular location is the plastid. It localises to the chloroplast. Functionally, component of the chloroplast ribosome (chloro-ribosome), a dedicated translation machinery responsible for the synthesis of chloroplast genome-encoded proteins, including proteins of the transcription and translation machinery and components of the photosynthetic apparatus. The protein is Large ribosomal subunit protein bL34c (RPL34) of Spinacia oleracea (Spinach).